Reading from the N-terminus, the 178-residue chain is UPF0215 protein STK_03040 (178 aa).

It belongs to the UPF0215 family.

This Sulfurisphaera tokodaii (strain DSM 16993 / JCM 10545 / NBRC 100140 / 7) (Sulfolobus tokodaii) protein is UPF0215 protein STK_03040.